A 301-amino-acid polypeptide reads, in one-letter code: 33 kDa chaperonin (301 aa).

2 disulfides stabilise this stretch: C239–C241 and C272–C275.

This sequence belongs to the HSP33 family. Under oxidizing conditions two disulfide bonds are formed involving the reactive cysteines. Under reducing conditions zinc is bound to the reactive cysteines and the protein is inactive.

It localises to the cytoplasm. Redox regulated molecular chaperone. Protects both thermally unfolding and oxidatively damaged proteins from irreversible aggregation. Plays an important role in the bacterial defense system toward oxidative stress. This chain is 33 kDa chaperonin, found in Nostoc sp. (strain PCC 7120 / SAG 25.82 / UTEX 2576).